The sequence spans 566 residues: Glutamate--tRNA ligase (566 aa).

The 'HIGH' region signature appears at 105–115 (PNPDGPIHLGN).

Belongs to the class-I aminoacyl-tRNA synthetase family. Glutamate--tRNA ligase type 2 subfamily.

It localises to the cytoplasm. It carries out the reaction tRNA(Glu) + L-glutamate + ATP = L-glutamyl-tRNA(Glu) + AMP + diphosphate. Its function is as follows. Catalyzes the attachment of glutamate to tRNA(Glu) in a two-step reaction: glutamate is first activated by ATP to form Glu-AMP and then transferred to the acceptor end of tRNA(Glu). In Sulfurisphaera tokodaii (strain DSM 16993 / JCM 10545 / NBRC 100140 / 7) (Sulfolobus tokodaii), this protein is Glutamate--tRNA ligase.